The following is a 794-amino-acid chain: DNA mismatch repair protein pms1 (794 aa).

Disordered regions lie at residues 351–384 and 409–442; these read SQIP…SFSY and GASL…TASS. Polar residues predominate over residues 352 to 371; that stretch reads QIPDSSGDSTDQELPQSIPA. Residues 419 to 429 are compositionally biased toward basic and acidic residues; sequence LPERLQKDSMR. Residues 430–442 show a composition bias toward polar residues; sequence RSSPLNEKVTASS.

This sequence belongs to the DNA mismatch repair MutL/HexB family.

This protein is involved in the repair of mismatches in DNA. The polypeptide is DNA mismatch repair protein pms1 (pms1) (Schizosaccharomyces pombe (strain 972 / ATCC 24843) (Fission yeast)).